Here is a 130-residue protein sequence, read N- to C-terminus: Acyl carrier protein 2, chloroplastic (130 aa).

A chloroplast-targeting transit peptide spans 1–48 (MASITGSSVSFKCAPLQSSFNSKNYALKSSVTFWRRTPVMPRGLSVSC). Residues 52–127 (PEMVTKVSDI…EAADMIEALQ (76 aa)) form the Carrier domain. Position 87 is an O-(pantetheine 4'-phosphoryl)serine (Ser-87).

It belongs to the acyl carrier protein (ACP) family. 4'-phosphopantetheine is transferred from CoA to a specific serine of apo-ACP by acpS. This modification is essential for activity because fatty acids are bound in thioester linkage to the sulfhydryl of the prosthetic group. As to expression, roots, leaves and seeds.

The protein localises to the plastid. It is found in the chloroplast. The protein operates within lipid metabolism; fatty acid biosynthesis. Its function is as follows. Carrier of the growing fatty acid chain in fatty acid biosynthesis. In Spinacia oleracea (Spinach), this protein is Acyl carrier protein 2, chloroplastic (ACL1.2).